A 351-amino-acid chain; its full sequence is Nicotinate-nucleotide--dimethylbenzimidazole phosphoribosyltransferase (351 aa).

The active-site Proton acceptor is the glutamate 317.

The protein belongs to the CobT family.

The catalysed reaction is 5,6-dimethylbenzimidazole + nicotinate beta-D-ribonucleotide = alpha-ribazole 5'-phosphate + nicotinate + H(+). The protein operates within nucleoside biosynthesis; alpha-ribazole biosynthesis; alpha-ribazole from 5,6-dimethylbenzimidazole: step 1/2. Its function is as follows. Catalyzes the synthesis of alpha-ribazole-5'-phosphate from nicotinate mononucleotide (NAMN) and 5,6-dimethylbenzimidazole (DMB). The sequence is that of Nicotinate-nucleotide--dimethylbenzimidazole phosphoribosyltransferase from Pseudomonas putida (strain GB-1).